We begin with the raw amino-acid sequence, 351 residues long: uncharacterized protein (351 aa).

The Mn(2+) site is built by Asp-215, Asp-226, His-290, Glu-319, and Glu-333.

The protein belongs to the peptidase M24B family. The cofactor is Mn(2+).

This is an uncharacterized protein from Staphylococcus aureus (strain MSSA476).